The following is a 314-amino-acid chain: Methionyl-tRNA formyltransferase (314 aa).

A (6S)-5,6,7,8-tetrahydrofolate-binding site is contributed by 112-115; it reads SLLP.

The protein belongs to the Fmt family.

The enzyme catalyses L-methionyl-tRNA(fMet) + (6R)-10-formyltetrahydrofolate = N-formyl-L-methionyl-tRNA(fMet) + (6S)-5,6,7,8-tetrahydrofolate + H(+). Attaches a formyl group to the free amino group of methionyl-tRNA(fMet). The formyl group appears to play a dual role in the initiator identity of N-formylmethionyl-tRNA by promoting its recognition by IF2 and preventing the misappropriation of this tRNA by the elongation apparatus. This is Methionyl-tRNA formyltransferase from Legionella pneumophila (strain Corby).